Consider the following 363-residue polypeptide: Putative aryl-alcohol dehydrogenase AAD3 (363 aa).

This sequence belongs to the aldo/keto reductase family. Aldo/keto reductase 2 subfamily.

The chain is Putative aryl-alcohol dehydrogenase AAD3 (AAD3) from Saccharomyces cerevisiae (strain ATCC 204508 / S288c) (Baker's yeast).